We begin with the raw amino-acid sequence, 212 residues long: Peptide methionine sulfoxide reductase MsrA (212 aa).

Cys-52 is an active-site residue.

This sequence belongs to the MsrA Met sulfoxide reductase family.

The enzyme catalyses L-methionyl-[protein] + [thioredoxin]-disulfide + H2O = L-methionyl-(S)-S-oxide-[protein] + [thioredoxin]-dithiol. The catalysed reaction is [thioredoxin]-disulfide + L-methionine + H2O = L-methionine (S)-S-oxide + [thioredoxin]-dithiol. Functionally, has an important function as a repair enzyme for proteins that have been inactivated by oxidation. Catalyzes the reversible oxidation-reduction of methionine sulfoxide in proteins to methionine. The polypeptide is Peptide methionine sulfoxide reductase MsrA (Yersinia enterocolitica serotype O:8 / biotype 1B (strain NCTC 13174 / 8081)).